Consider the following 905-residue polypeptide: DNA gyrase subunit A (905 aa).

Positions 35-524 constitute a Topo IIA-type catalytic domain; sequence IPDVRDGLKP…GEFDQDIEDL (490 aa). Tyr123 serves as the catalytic O-(5'-phospho-DNA)-tyrosine intermediate. Residues 551–557 carry the GyrA-box motif; the sequence is QKRGGKG. Positions 882–905 are disordered; that stretch reads IAESSDDNEEDSEFEEEVAEEGSE. The span at 885–905 shows a compositional bias: acidic residues; that stretch reads SSDDNEEDSEFEEEVAEEGSE.

Belongs to the type II topoisomerase GyrA/ParC subunit family. As to quaternary structure, heterotetramer, composed of two GyrA and two GyrB chains. In the heterotetramer, GyrA contains the active site tyrosine that forms a transient covalent intermediate with DNA, while GyrB binds cofactors and catalyzes ATP hydrolysis.

It is found in the cytoplasm. It catalyses the reaction ATP-dependent breakage, passage and rejoining of double-stranded DNA.. A type II topoisomerase that negatively supercoils closed circular double-stranded (ds) DNA in an ATP-dependent manner to modulate DNA topology and maintain chromosomes in an underwound state. Negative supercoiling favors strand separation, and DNA replication, transcription, recombination and repair, all of which involve strand separation. Also able to catalyze the interconversion of other topological isomers of dsDNA rings, including catenanes and knotted rings. Type II topoisomerases break and join 2 DNA strands simultaneously in an ATP-dependent manner. The sequence is that of DNA gyrase subunit A from Rickettsia bellii (strain RML369-C).